The primary structure comprises 313 residues: Porphobilinogen deaminase (313 aa).

The residue at position 242 (Cys-242) is an S-(dipyrrolylmethanemethyl)cysteine.

The protein belongs to the HMBS family. In terms of assembly, monomer. Dipyrromethane is required as a cofactor.

It catalyses the reaction 4 porphobilinogen + H2O = hydroxymethylbilane + 4 NH4(+). It participates in porphyrin-containing compound metabolism; protoporphyrin-IX biosynthesis; coproporphyrinogen-III from 5-aminolevulinate: step 2/4. Tetrapolymerization of the monopyrrole PBG into the hydroxymethylbilane pre-uroporphyrinogen in several discrete steps. This chain is Porphobilinogen deaminase, found in Salmonella dublin (strain CT_02021853).